The following is a 258-amino-acid chain: Acetylglutamate kinase (258 aa).

Residues 44–45 (GG), arginine 66, and asparagine 158 contribute to the substrate site. ATP-binding positions include 181–186 (DVSGIL) and 209–211 (IIT).

The protein belongs to the acetylglutamate kinase family. ArgB subfamily. Homodimer.

Its subcellular location is the cytoplasm. The catalysed reaction is N-acetyl-L-glutamate + ATP = N-acetyl-L-glutamyl 5-phosphate + ADP. Its pathway is amino-acid biosynthesis; L-arginine biosynthesis; N(2)-acetyl-L-ornithine from L-glutamate: step 2/4. Its function is as follows. Catalyzes the ATP-dependent phosphorylation of N-acetyl-L-glutamate. The protein is Acetylglutamate kinase of Salmonella paratyphi A (strain ATCC 9150 / SARB42).